The sequence spans 257 residues: UPF0246 protein Sputcn32_1053 (257 aa).

The protein belongs to the UPF0246 family.

The sequence is that of UPF0246 protein Sputcn32_1053 from Shewanella putrefaciens (strain CN-32 / ATCC BAA-453).